The primary structure comprises 322 residues: ATP-dependent 6-phosphofructokinase (322 aa).

Gly-11 is an ATP binding site. ADP is bound at residue 21–25 (RAVAR). ATP-binding positions include 72–73 (RY) and 102–105 (GDGS). Asp-103 contributes to the Mg(2+) binding site. Position 125–127 (125–127 (TID)) interacts with substrate. The active-site Proton acceptor is Asp-127. Arg-154 provides a ligand contact to ADP. Residues Arg-162 and 169–171 (MGR) each bind substrate. Residues 185–187 (GAD) and 213–215 (KDY) each bind ADP. Substrate contacts are provided by residues Glu-222, Arg-246, and 252-255 (HVQR).

It belongs to the phosphofructokinase type A (PFKA) family. ATP-dependent PFK group I subfamily. Prokaryotic clade 'B1' sub-subfamily. As to quaternary structure, homotetramer. Mg(2+) serves as cofactor.

The protein resides in the cytoplasm. The enzyme catalyses beta-D-fructose 6-phosphate + ATP = beta-D-fructose 1,6-bisphosphate + ADP + H(+). It participates in carbohydrate degradation; glycolysis; D-glyceraldehyde 3-phosphate and glycerone phosphate from D-glucose: step 3/4. With respect to regulation, allosterically activated by ADP and other diphosphonucleosides, and allosterically inhibited by phosphoenolpyruvate. In terms of biological role, catalyzes the phosphorylation of D-fructose 6-phosphate to fructose 1,6-bisphosphate by ATP, the first committing step of glycolysis. The protein is ATP-dependent 6-phosphofructokinase of Pediococcus pentosaceus (strain ATCC 25745 / CCUG 21536 / LMG 10740 / 183-1w).